Reading from the N-terminus, the 246-residue chain is Eukaryotic translation initiation factor 6 (246 aa).

Residues S174 and S175 each carry the phosphoserine; by CK1 modification.

The protein belongs to the eIF-6 family. Monomer. Associates with the 60S ribosomal subunit. Post-translationally, phosphorylation at Ser-174 and Ser-175 promotes nuclear export.

It localises to the cytoplasm. It is found in the nucleus. The protein localises to the nucleolus. Binds to the 60S ribosomal subunit and prevents its association with the 40S ribosomal subunit to form the 80S initiation complex in the cytoplasm. Is also involved in ribosome biogenesis. Associates with pre-60S subunits in the nucleus and is involved in its nuclear export. This is Eukaryotic translation initiation factor 6 (tif-6) from Neurospora crassa (strain ATCC 24698 / 74-OR23-1A / CBS 708.71 / DSM 1257 / FGSC 987).